The sequence spans 73 residues: MSTVETPAQDTLATKEPNKTGAKDRQQARSARLSVAAGAGRTALSQRDAQEDRFSLGIVQTADKIENTFNFNF.

Polar residues predominate over residues 1–12; sequence MSTVETPAQDTL. A disordered region spans residues 1–48; the sequence is MSTVETPAQDTLATKEPNKTGAKDRQQARSARLSVAAGAGRTALSQRD. Residues 16 to 27 show a composition bias toward basic and acidic residues; the sequence is EPNKTGAKDRQQ.

Belongs to the carmovirus/necrovirus/panicovirus movement protein p8 family.

Its subcellular location is the host cell wall. In terms of biological role, cell-to-cell movement. The chain is Probable movement protein p8 from Muhlenbergia (Blackwell switchgrass).